A 457-amino-acid polypeptide reads, in one-letter code: Argininosuccinate lyase (457 aa).

Belongs to the lyase 1 family. Argininosuccinate lyase subfamily.

The protein resides in the cytoplasm. The catalysed reaction is 2-(N(omega)-L-arginino)succinate = fumarate + L-arginine. The protein operates within amino-acid biosynthesis; L-arginine biosynthesis; L-arginine from L-ornithine and carbamoyl phosphate: step 3/3. The protein is Argininosuccinate lyase of Pectobacterium carotovorum subsp. carotovorum (strain PC1).